Reading from the N-terminus, the 161-residue chain is Probable chemoreceptor glutamine deamidase CheD (161 aa).

It belongs to the CheD family.

The enzyme catalyses L-glutaminyl-[protein] + H2O = L-glutamyl-[protein] + NH4(+). Its function is as follows. Probably deamidates glutamine residues to glutamate on methyl-accepting chemotaxis receptors (MCPs), playing an important role in chemotaxis. The polypeptide is Probable chemoreceptor glutamine deamidase CheD (Thermococcus kodakarensis (strain ATCC BAA-918 / JCM 12380 / KOD1) (Pyrococcus kodakaraensis (strain KOD1))).